The sequence spans 886 residues: Peptidyl-lysine N-acetyltransferase Pat (886 aa).

Positions 487 to 523 (QPILHAYGLHTLPTWIASDSAEAVHIAEQIGYPVALK) constitute an ATP-grasp domain. Residue 513 to 524 (AEQIGYPVALKL) participates in ATP binding. One can recognise an N-acetyltransferase domain in the interval 726 to 881 (CLFRPILPED…GIVGLTLNLA (156 aa)).

In the N-terminal section; belongs to the acetate CoA ligase alpha subunit family. It in the central section; belongs to the acetate CoA ligase beta subunit family. Monomer in the absence of acetyl-CoA. Oligomerizes to a tetrameric form in the presence of acetyl-CoA.

The enzyme catalyses L-lysyl-[protein] + acetyl-CoA = N(6)-acetyl-L-lysyl-[protein] + CoA + H(+). Exhibits positive cooperativity. It may be the result of acetyl-CoA binding to two distinct sites, or the result of subunit interactions. Acetylates and inactivates the acetyl-CoA synthase (Acs). Can also acetylate other central metabolic enzymes in response to environmental changes. The sequence is that of Peptidyl-lysine N-acetyltransferase Pat (pat) from Salmonella typhimurium (strain LT2 / SGSC1412 / ATCC 700720).